Reading from the N-terminus, the 124-residue chain is Small ribosomal subunit protein uS13 (124 aa).

Residues 99–124 (RGQRTRTNARTRKGPRKTVGVMRKKS) form a disordered region. A compositionally biased stretch (basic residues) spans 101 to 124 (QRTRTNARTRKGPRKTVGVMRKKS).

It belongs to the universal ribosomal protein uS13 family. As to quaternary structure, part of the 30S ribosomal subunit. Forms a loose heterodimer with protein S19. Forms two bridges to the 50S subunit in the 70S ribosome.

Located at the top of the head of the 30S subunit, it contacts several helices of the 16S rRNA. In the 70S ribosome it contacts the 23S rRNA (bridge B1a) and protein L5 of the 50S subunit (bridge B1b), connecting the 2 subunits; these bridges are implicated in subunit movement. Contacts the tRNAs in the A and P-sites. This chain is Small ribosomal subunit protein uS13, found in Caldicellulosiruptor saccharolyticus (strain ATCC 43494 / DSM 8903 / Tp8T 6331).